A 270-amino-acid polypeptide reads, in one-letter code: Regulator of G-protein signaling rgs-10 (270 aa).

One can recognise an RGS domain in the interval 135 to 252 (SPETLAASEY…LEDPLYLDLV (118 aa)).

Its function is as follows. Shown to have a role in viability and embryogenesis. This chain is Regulator of G-protein signaling rgs-10 (rgs-10), found in Caenorhabditis elegans.